Consider the following 1254-residue polypeptide: Structural polyprotein (1254 aa).

The tract at residues 43-77 (LQAQQMQQLISAVSALTTKQNVKAPKGQRKQKQQK) is host transcription inhibition. A disordered region spans residues 60-112 (TKQNVKAPKGQRKQKQQKPKEKKEKQKKKPTXKKKQQQKPKPQAKKKKPGRRE). The Nuclear localization signal motif lies at 70–108 (QRKQKQQKPKEKKEKQKKKPTXKKKQQQKPKPQAKKKKP). A compositionally biased stretch (basic residues) spans 84–110 (KQKKKPTXKKKQQQKPKPQAKKKKPGR). Positions 95 to 123 (QQQKPKPQAKKKKPGRRERMCMKIENDCI) are binding to the viral RNA. The ribosome-binding stretch occupies residues 108-122 (PGRRERMCMKIENDC). Cys122 and Cys137 form a disulfide bridge. Residues 122 to 270 (CIFEVKLDGK…RVTPEGTEEW (149 aa)) enclose the Peptidase S3 domain. His148 functions as the Charge relay system in the catalytic mechanism. The short motif at 153 to 163 (IDNPDLAKLTY) is the Nuclear export signal element. The tract at residues 164–169 (KKSSKY) is interaction with spike glycoprotein E2. Asp170 serves as the catalytic Charge relay system. Residues 192–202 (PEGHYNWHHGA) form a dimerization of the capsid protein region. Catalysis depends on Ser222, which acts as the Charge relay system. The segment at 228 to 232 (DNKGR) is dimerization of the capsid protein. The Extracellular segment spans residues 270-694 (WSAALMMCIL…PHEIIQYYYG (425 aa)). The functions as an uncleaved signal peptide for the precursor of protein E3/E2 stretch occupies residues 271–282 (SAALMMCILANT). 3 cysteine pairs are disulfide-bonded: Cys277-Cys286, Cys291-Cys295, and Cys294-Cys326. Asn281 carries N-linked (GlcNAc...) asparagine; by host glycosylation. Residue Asn328 is glycosylated (N-linked (GlcNAc...) asparagine; by host). Intrachain disulfides connect Cys353–Cys459, Cys356–Cys362, Cys425–Cys439, Cys487–Cys599, Cys535–Cys559, and Cys537–Cys554. Interaction with host Mxra8 receptor regions lie at residues 360–363 (YFCY) and 396–398 (HAH). Residues 518 to 521 (TAGN) are interaction with host Mxra8 receptor. N-linked (GlcNAc...) asparagine; by host glycosylation is present at Asn534. The segment at 550-556 (TINTCKI) is interaction with host Mxra8 receptor. Asn596 is a glycosylation site (N-linked (GlcNAc...) asparagine; by host). A helical transmembrane segment spans residues 695–715 (LYPAATIAAVSGASLMALLTL). The Cytoplasmic portion of the chain corresponds to 716–756 (AATCCMLATARRKCLTPYALTPGAVVPLTLGLLXCAPRANA). Cys719 carries S-palmitoyl cysteine; by host lipidation. Residues 724 to 728 (TARRK) are interaction with the capsid protein. Residues Cys729 and Cys750 are each lipidated (S-palmitoyl cysteine; by host). The transient transmembrane before p62-6K protein processing stretch occupies residues 729 to 749 (CLTPYALTPGAVVPLTLGLLX). An intrachain disulfide couples Cys729 to Cys750. The Extracellular portion of the chain corresponds to 757–771 (ASFAETMAYLWDENK). Residues 772-792 (TLFWMEXXXXXXALALLACCI) form a helical membrane-spanning segment. Residue Lys793 is a topological domain, cytoplasmic. Residues 794-814 (SLICCCKPFSFLVLLSLGASA) form a helical membrane-spanning segment. Over 815-1231 (KAYEHTATIP…AMTWVQRMAS (417 aa)) the chain is Extracellular. 4 disulfide bridges follow: Cys865/Cys930, Cys878/Cys910, Cys879/Cys912, and Cys884/Cys894. An E1 fusion peptide loop region spans residues 900–917 (VYPFMWGGAYCFCDSENT). An N-linked (GlcNAc...) asparagine; by host glycan is attached at Asn957. 4 cysteine pairs are disulfide-bonded: Cys1075/Cys1087, Cys1117/Cys1192, Cys1122/Cys1196, and Cys1144/Cys1186. The helical transmembrane segment at 1232–1252 (GLGGLALIAVVVLVLVTCITM) threads the bilayer. The S-palmitoyl cysteine; by host moiety is linked to residue Cys1249. Cys1249 is lipidated: S-stearoyl cysteine; by host. The Cytoplasmic portion of the chain corresponds to 1253–1254 (RR).

In terms of assembly, homodimer. Homomultimer. Interacts with host karyopherin KPNA4; this interaction allows the nuclear import of the viral capsid protein. Interacts with spike glycoprotein E2. Interacts with host IRAK1; the interaction leads to inhibition of IRAK1-dependent signaling. The precursor of protein E3/E2 and E1 form a heterodimer shortly after synthesis. As to quaternary structure, the precursor of protein E3/E2 and E1 form a heterodimer shortly after synthesis. Processing of the precursor of protein E3/E2 into E2 and E3 results in a heterodimer of the spike glycoproteins E2 and E1. Spike at virion surface are constituted of a trimer of E2-E1 heterodimers. After target cell attachment and endocytosis, E1 change conformation to form homotrimers. Interacts with 6K protein. In terms of assembly, interacts with spike glycoprotein E1. Processing of the precursor of protein E3/E2 into E2 and E3 results in a heterodimer of the spike glycoproteins E2 and E1. Spike at virion surface are constituted of a trimer of E2-E1 heterodimers. Interacts with 6K protein. Interacts with host MXRA8; this interaction mediates virus entry. Structural polyprotein: Specific enzymatic cleavages in vivo yield mature proteins. Capsid protein is auto-cleaved during polyprotein translation, unmasking a signal peptide at the N-terminus of the precursor of E3/E2. The remaining polyprotein is then targeted to the host endoplasmic reticulum, where host signal peptidase cleaves it into pE2, 6K and E1 proteins. pE2 is further processed to mature E3 and E2 by host furin in trans-Golgi vesicle. In terms of processing, palmitoylated via thioester bonds. These palmitoylations may induce disruption of the C-terminus transmembrane. This would result in the reorientation of E2 C-terminus from lumenal to cytoplasmic side. Post-translationally, N-glycosylated. Palmitoylated via thioester bonds.

The protein resides in the virion. It localises to the host cytoplasm. Its subcellular location is the host cell membrane. The protein localises to the host nucleus. It is found in the virion membrane. The protein resides in the host Golgi apparatus. It localises to the host trans-Golgi network. Its subcellular location is the host endoplasmic reticulum. The catalysed reaction is Autocatalytic release of the core protein from the N-terminus of the togavirus structural polyprotein by hydrolysis of a -Trp-|-Ser- bond.. In terms of biological role, forms an icosahedral capsid with a T=4 symmetry composed of 240 copies of the capsid protein surrounded by a lipid membrane through which penetrate 80 spikes composed of trimers of E1-E2 heterodimers. The capsid protein binds to the viral RNA genome at a site adjacent to a ribosome binding site for viral genome translation following genome release. Possesses a protease activity that results in its autocatalytic cleavage from the nascent structural protein. Following its self-cleavage, the capsid protein transiently associates with ribosomes, and within several minutes the protein binds to viral RNA and rapidly assembles into icosahedric core particles. The resulting nucleocapsid eventually associates with the cytoplasmic domain of the spike glycoprotein E2 at the cell membrane, leading to budding and formation of mature virions. In case of infection, new virions attach to target cells and after clathrin-mediated endocytosis their membrane fuses with the host endosomal membrane. This leads to the release of the nucleocapsid into the cytoplasm, followed by an uncoating event necessary for the genomic RNA to become accessible. The uncoating might be triggered by the interaction of capsid proteins with ribosomes. Binding of ribosomes would release the genomic RNA since the same region is genomic RNA-binding and ribosome-binding. Specifically inhibits interleukin-1 receptor-associated kinase 1/IRAK1-dependent signaling during viral entry, representing a means by which the alphaviruses may evade innate immune detection and activation prior to viral gene expression. Its function is as follows. Provides the signal sequence for the translocation of the precursor of protein E3/E2 to the host endoplasmic reticulum. Furin-cleaved E3 remains associated with spike glycoprotein E1 and mediates pH protection of the latter during the transport via the secretory pathway. After virion release from the host cell, the assembly protein E3 is gradually released in the extracellular space. Plays a role in viral attachment to target host cell, by binding to the cell receptor MXRA8. The host LDLR may also act as a cell receptor for viral entry. Synthesized as a p62 precursor which is processed by furin at the cell membrane just before virion budding, giving rise to E2-E1 heterodimer. The p62-E1 heterodimer is stable, whereas E2-E1 is unstable and dissociate at low pH. p62 is processed at the last step, presumably to avoid E1 fusion activation before its final export to cell surface. E2 C-terminus contains a transitory transmembrane that would be disrupted by palmitoylation, resulting in reorientation of the C-terminal tail from lumenal to cytoplasmic side. This step is critical since E2 C-terminus is involved in budding by interacting with capsid proteins. This release of E2 C-terminus in cytoplasm occurs lately in protein export, and precludes premature assembly of particles at the endoplasmic reticulum membrane. Functionally, acts as a viroporin that participates in virus glycoprotein processing and transport to the plasma membrane, cell permeabilization and budding of viral particles. The cation channel is permeable to Na(+)&gt;K(+)&gt;Ca(2+) in vitro. Disrupts the calcium homeostasis of the cell, probably at the endoplasmic reticulum level. This leads to cytoplasmic calcium elevation. Because of its lipophilic properties, the 6K protein is postulated to influence the selection of lipids that interact with the transmembrane domains of the glycoproteins, which, in turn, affects the deformability of the bilayer required for the extreme curvature that occurs as budding proceeds. Present in low amount in virions, about 3% compared to viral glycoproteins. In terms of biological role, class II viral fusion protein. Fusion activity is inactive as long as E1 is bound to E2 in mature virion. After virus attachment to target cell via host MXRA8 and endocytosis, acidification of the endosome induce dissociation of E1/E2 heterodimer and concomitant trimerization of the E1 subunits. This E1 trimer is fusion active, and promotes release of viral nucleocapsid in cytoplasm after endosome and viral membrane fusion. Efficient fusion requires the presence of cholesterol and sphingolipid in the target membrane. This is Structural polyprotein from Ross river virus (strain NB5092) (RRV).